We begin with the raw amino-acid sequence, 451 residues long: MAGKRLFQDLDSDQENKSEKRIKSVLPSLASPISSVFGALISENTLRSVLEPVIRKVVRQEVEYGISKRFRLSRSSSFRIEAPEATTPTLKLIFRKNLMTPIFTGSKISDVDNNPLEIILVDDSNKPVNLNRPIKLDIVALHGDFPSGDKWTSDEFESNIIKERDGKRPLLAGEVSVTVRNGVATIGEIVFTDNSSWIRSRKFRIGAKVAKGSSGQGVVVCEAMTEAIVVRDHRGELYKKHHPPMLEDEVWRLEKIGKDGAFHKKLSSRHINTVQDFLKLSVVDVDELRQILGPGMSDRKWEVTLKHARECILGNKLYISRGPNFFMILNPICEVMKALIDGHVLSSQESLNQPYVKNLVRDAYSKGNFLEVGERTANEAALLTQGDDLDQQYAASHYQNIEIDKSYQQNGYVQERSTNNLEIVNEGYITTPAEFNICFTGSSSQNHINPF.

The DNA-binding stretch occupies residues 149–270; the sequence is DKWTSDEFES…AFHKKLSSRH (122 aa).

This sequence belongs to the plant ACBP60 protein family. In terms of assembly, (Microbial infection) Interacts with V.dahliae SCP41.

It localises to the nucleus. Transcription activator that binds DNA in a sequence-specific manner, 5'-GAAATTTTGG-3', to promote the expression of target genes. Recruited to the promoter of ICS1 and other defense-related genes (e.g. PR1 and SID2) in response to both biotic (e.g. Pseudomonas syringae pv. maculicola ES4326) and abiotic stresses (e.g. UV-B), thus triggering slow defense responses by stimulating salicylic acid (SA) biosynthesis. Required for basal and systemic acquired resistance to P.syringae pv. maculicola and Hyaloperonospora arabidopsidis. This chain is Protein SAR DEFICIENT 1, found in Arabidopsis thaliana (Mouse-ear cress).